Consider the following 95-residue polypeptide: Orphan antitoxin ParD2 (95 aa).

In terms of biological role, antitoxin component of a non-functional type II toxin-antitoxin (TA system). Does not neutralize the effect of any of the RelE or ParE toxins. The polypeptide is Orphan antitoxin ParD2 (parD2) (Caulobacter vibrioides (strain ATCC 19089 / CIP 103742 / CB 15) (Caulobacter crescentus)).